Reading from the N-terminus, the 108-residue chain is UPF0102 protein Sputcn32_3693 (108 aa).

It belongs to the UPF0102 family.

This chain is UPF0102 protein Sputcn32_3693, found in Shewanella putrefaciens (strain CN-32 / ATCC BAA-453).